The chain runs to 255 residues: Putative ankyrin repeat protein R880 (255 aa).

5 ANK repeats span residues 79–109 (SGIN…DIHY), 110–139 (KTDY…NINT), 141–169 (DCYA…NVRK), 171–199 (RDLA…DVRS), and 201–229 (KNYA…NFRV).

The chain is Putative ankyrin repeat protein R880 from Acanthamoeba polyphaga (Amoeba).